The primary structure comprises 538 residues: MATGRLGVGETLEALNAAVGPGSPVWFKETHARHLRVRDFLAPRSALQARFRDGQVPECVFRAVSCLQGPGVAPVLRCAPTPAGLSLQLQRPAVFEHVLGALASYATPAKPASPGPRVVLHCPALRCNSGTLRLSQLRAVLVADHLVRVLRAHGVRVCSVPPVRDPHMSTFLQKLRVEWPTASKSTSTETLRTCVLANLNGSKEATLPPGVLGRLCLKELVEQRGTAGYDPSIDHCLVTEDVLSVLSELQEAVRHWPEGGHPGPAGRPDAGVDDCVVIHVVSCEEAFQQQKLDLLWQKLDDRAPHKQKHLVCGPVKMAGVPGTQLTAPQYYRLRHAQVCEASALKHGGDLAQDPAWTETFDILSVATIKFEMLSTAPQSQLLLAHSTISTKGTKSGTFVMYNCARLATLFEGYKHGTEQGLYPTFPLVSSLDFSLLHDEGEWLLLFNSVLPFLDLLSQTVSLAGTPGLHIPVRTEMVCKFLVQLSMDFSSYYNRVHILGEPRPHLFGQMFARLQLLRAVREVFHTGLAMLGLPPLSHI.

As to quaternary structure, part of a complex containing tRNA(Arg) and METTL2. Interacts with tRNA(Arg)(CCU) and tRNA(Arg)(UCU). Interacts with METTL2.

Involved in tRNA methylation. Facilitates the recognition and targeting of tRNA(Arg)(CCU) and tRNA(Arg)(UCU) substrates for N(3)-methylcytidine modification by METTL2. The protein is DALR anticodon-binding domain-containing protein 3 (Dalrd3) of Mus musculus (Mouse).